The chain runs to 413 residues: Serine hydroxymethyltransferase (413 aa).

(6S)-5,6,7,8-tetrahydrofolate is bound by residues Leu119 and 123-125; that span reads GHL. N6-(pyridoxal phosphate)lysine is present on Lys228. A (6S)-5,6,7,8-tetrahydrofolate-binding site is contributed by 351–353; it reads SPF.

This sequence belongs to the SHMT family. As to quaternary structure, homodimer. It depends on pyridoxal 5'-phosphate as a cofactor.

It is found in the cytoplasm. The catalysed reaction is (6R)-5,10-methylene-5,6,7,8-tetrahydrofolate + glycine + H2O = (6S)-5,6,7,8-tetrahydrofolate + L-serine. It participates in one-carbon metabolism; tetrahydrofolate interconversion. It functions in the pathway amino-acid biosynthesis; glycine biosynthesis; glycine from L-serine: step 1/1. In terms of biological role, catalyzes the reversible interconversion of serine and glycine with tetrahydrofolate (THF) serving as the one-carbon carrier. This reaction serves as the major source of one-carbon groups required for the biosynthesis of purines, thymidylate, methionine, and other important biomolecules. Also exhibits THF-independent aldolase activity toward beta-hydroxyamino acids, producing glycine and aldehydes, via a retro-aldol mechanism. The protein is Serine hydroxymethyltransferase of Clostridium botulinum (strain 657 / Type Ba4).